Here is a 97-residue protein sequence, read N- to C-terminus: MARSISNVKIVSAFVSRELSNAIFRRGYAATAAQGSVSSGGRSGAVASAVMKKKGVEESTQKISWVPDPKTGYYRPETGSNEIDAAELRAALLNNKQ.

The transit peptide at 1–46 (MARSISNVKIVSAFVSRELSNAIFRRGYAATAAQGSVSSGGRSGAV) directs the protein to the mitochondrion.

The protein belongs to the LEA type 3 family. In terms of tissue distribution, expressed in roots, stems leaves and flowers, but not in seeds. In short days, observed in cotyledons and roots but absent from rosette leaves.

It localises to the mitochondrion. In terms of biological role, mediates tolerance to oxidative stresses (e.g. hydrogen peroxide H(2)O(2), diamide, menadione and tert-butyl hydroperoxide) by minimizing the negative effects of oxidation and monitoring photosynthesis during stress. Promotes root development. Prevents premature aging (e.g. senescence and flowering). Involved in resistance against compatible pathogens such as Botrytis cinerea and Pseudomonas syringae pv. tomato. This chain is Protein SENESCENCE-ASSOCIATED GENE 21, mitochondrial, found in Arabidopsis thaliana (Mouse-ear cress).